Here is a 213-residue protein sequence, read N- to C-terminus: Proteasome subunit beta (213 aa).

The propeptide at 1-11 (MSMIEEKIYKG) is removed in mature form; by autocatalysis. Threonine 12 acts as the Nucleophile in catalysis.

Belongs to the peptidase T1B family. In terms of assembly, the 20S proteasome core is composed of 14 alpha and 14 beta subunits that assemble into four stacked heptameric rings, resulting in a barrel-shaped structure. The two inner rings, each composed of seven catalytic beta subunits, are sandwiched by two outer rings, each composed of seven alpha subunits. The catalytic chamber with the active sites is on the inside of the barrel. Has probably a gated structure, the ends of the cylinder being occluded by the N-termini of the alpha-subunits. Is likely capped at one or both ends by the proteasome regulatory ATPase, PAN.

It is found in the cytoplasm. The enzyme catalyses Cleavage of peptide bonds with very broad specificity.. Its activity is regulated as follows. The formation of the proteasomal ATPase PAN-20S proteasome complex, via the docking of the C-termini of PAN into the intersubunit pockets in the alpha-rings, triggers opening of the gate for substrate entry. Interconversion between the open-gate and close-gate conformations leads to a dynamic regulation of the 20S proteasome proteolysis activity. Functionally, component of the proteasome core, a large protease complex with broad specificity involved in protein degradation. The polypeptide is Proteasome subunit beta (Archaeoglobus fulgidus (strain ATCC 49558 / DSM 4304 / JCM 9628 / NBRC 100126 / VC-16)).